The chain runs to 309 residues: Ribosomal RNA small subunit methyltransferase H (309 aa).

S-adenosyl-L-methionine is bound by residues 36–38 (GGH), Asp-56, Phe-82, Asp-103, and Gln-110.

This sequence belongs to the methyltransferase superfamily. RsmH family.

It localises to the cytoplasm. It catalyses the reaction cytidine(1402) in 16S rRNA + S-adenosyl-L-methionine = N(4)-methylcytidine(1402) in 16S rRNA + S-adenosyl-L-homocysteine + H(+). Its function is as follows. Specifically methylates the N4 position of cytidine in position 1402 (C1402) of 16S rRNA. This is Ribosomal RNA small subunit methyltransferase H from Hahella chejuensis (strain KCTC 2396).